The sequence spans 78 residues: uncharacterized protein (78 aa).

A run of 2 helical transmembrane segments spans residues 5–24 (LALL…IKLM) and 39–61 (LWLQ…AGFI).

The protein localises to the cell membrane. This is an uncharacterized protein from Bacillus subtilis (strain 168).